The chain runs to 838 residues: Leucine--tRNA ligase (838 aa).

The 'HIGH' region signature appears at 36–46; that stretch reads PYPSGKIHMGH. Positions 611–615 match the 'KMSKS' region motif; that stretch reads KMSKS. Residue lysine 614 participates in ATP binding.

The protein belongs to the class-I aminoacyl-tRNA synthetase family.

It localises to the cytoplasm. The catalysed reaction is tRNA(Leu) + L-leucine + ATP = L-leucyl-tRNA(Leu) + AMP + diphosphate. This Wolbachia pipientis wMel protein is Leucine--tRNA ligase.